Consider the following 331-residue polypeptide: CRISPR-associated endonuclease Cas1 (331 aa).

Mn(2+) is bound by residues Glu155, His221, and Glu236.

Belongs to the CRISPR-associated endonuclease Cas1 family. Homodimer, forms a heterotetramer with a Cas2 homodimer. The cofactor is Mg(2+). Mn(2+) is required as a cofactor.

Functionally, CRISPR (clustered regularly interspaced short palindromic repeat), is an adaptive immune system that provides protection against mobile genetic elements (viruses, transposable elements and conjugative plasmids). CRISPR clusters contain spacers, sequences complementary to antecedent mobile elements, and target invading nucleic acids. CRISPR clusters are transcribed and processed into CRISPR RNA (crRNA). Acts as a dsDNA endonuclease. Involved in the integration of spacer DNA into the CRISPR cassette. This chain is CRISPR-associated endonuclease Cas1, found in Methanopyrus kandleri (strain AV19 / DSM 6324 / JCM 9639 / NBRC 100938).